Here is a 116-residue protein sequence, read N- to C-terminus: uncharacterized protein (116 aa).

The VOC domain occupies 5-113; the sequence is EVKMVVLSTE…TGNGLVFYSP (109 aa). An Isoglutamyl lysine isopeptide (Lys-Gln) (interchain with Q-Cter in protein Pup) cross-link involves residue K76.

This is an uncharacterized protein from Mycolicibacterium smegmatis (strain ATCC 700084 / mc(2)155) (Mycobacterium smegmatis).